A 480-amino-acid polypeptide reads, in one-letter code: ATP synthase subunit beta, chloroplastic (480 aa).

161–168 (GGAGVGKT) contacts ATP.

Belongs to the ATPase alpha/beta chains family. F-type ATPases have 2 components, CF(1) - the catalytic core - and CF(0) - the membrane proton channel. CF(1) has five subunits: alpha(3), beta(3), gamma(1), delta(1), epsilon(1). CF(0) has four main subunits: a(1), b(1), b'(1) and c(9-12).

It is found in the plastid. It localises to the chloroplast thylakoid membrane. It carries out the reaction ATP + H2O + 4 H(+)(in) = ADP + phosphate + 5 H(+)(out). Its function is as follows. Produces ATP from ADP in the presence of a proton gradient across the membrane. The catalytic sites are hosted primarily by the beta subunits. In Tetradesmus obliquus (Green alga), this protein is ATP synthase subunit beta, chloroplastic.